A 297-amino-acid chain; its full sequence is Putative heme-binding peroxidase (297 aa).

His-74 serves as the catalytic Proton acceptor. His-198 lines the heme b pocket. Trp-214 functions as the Tryptophan radical intermediate in the catalytic mechanism.

The protein belongs to the peroxidase family. Cytochrome c peroxidase subfamily. Heme b is required as a cofactor.

Its function is as follows. Destroys radicals which are normally produced within the cells and which are toxic to biological systems. In Yarrowia lipolytica (strain CLIB 122 / E 150) (Yeast), this protein is Putative heme-binding peroxidase.